The sequence spans 209 residues: MEQESLNQERLVEEIAKRVKEILQLIGEDTEREGLKETPERVAKALLEMTSALRSPQPYIKVFSLAENENSSVEDQIVLVKDISFSSLCEHHLLPIIGKVHVAYVVGKSGKVAGLSKIIRLVNYYASRPQIQERLVEQIAEAIMKSDIQPKGVMVIGDALHMCTYVRGVKDREASLISLSTRGIFSTKPSLKSQVFRLINTSKKSSTFL.

3 residues coordinate Zn(2+): Cys-89, His-92, and Cys-163.

It belongs to the GTP cyclohydrolase I family. As to quaternary structure, toroid-shaped homodecamer, composed of two pentamers of five dimers.

The enzyme catalyses GTP + H2O = 7,8-dihydroneopterin 3'-triphosphate + formate + H(+). The protein operates within cofactor biosynthesis; 7,8-dihydroneopterin triphosphate biosynthesis; 7,8-dihydroneopterin triphosphate from GTP: step 1/1. The sequence is that of GTP cyclohydrolase 1 from Sulfolobus acidocaldarius (strain ATCC 33909 / DSM 639 / JCM 8929 / NBRC 15157 / NCIMB 11770).